The sequence spans 341 residues: Heat-inducible transcription repressor HrcA (341 aa).

Belongs to the HrcA family.

Functionally, negative regulator of class I heat shock genes (grpE-dnaK-dnaJ and groELS operons). Prevents heat-shock induction of these operons. The polypeptide is Heat-inducible transcription repressor HrcA (Corynebacterium jeikeium (strain K411)).